Reading from the N-terminus, the 274-residue chain is Penicillin-insensitive murein endopeptidase (274 aa).

An N-terminal signal peptide occupies residues 1 to 19 (MKKTAIALLAWFVSSASLA). 3 disulfide bridges follow: cysteine 44–cysteine 265, cysteine 187–cysteine 235, and cysteine 216–cysteine 223. The Zn(2+) site is built by histidine 110, histidine 113, aspartate 120, aspartate 147, histidine 150, and histidine 211. The segment at 225–274 (DQPLPPPGDGCGAELQSWFEPPKPGTTKPEKKTPPPLPPSCQALLDEHVL) is disordered.

It belongs to the peptidase M74 family. In terms of assembly, dimer. It depends on Zn(2+) as a cofactor.

It localises to the periplasm. Functionally, murein endopeptidase that cleaves the D-alanyl-meso-2,6-diamino-pimelyl amide bond that connects peptidoglycan strands. Likely plays a role in the removal of murein from the sacculus. This is Penicillin-insensitive murein endopeptidase from Salmonella agona (strain SL483).